The primary structure comprises 108 residues: U-scoloptoxin(16)-Sm1a (108 aa).

Residues 1 to 19 (MNLFLVLFVFSFSVSQFFA) form the signal peptide.

It belongs to the scoloptoxin-16 family. Contains 4 disulfide bonds. Expressed by the venom gland.

Its subcellular location is the secreted. In Scolopendra morsitans (Tanzanian blue ringleg centipede), this protein is U-scoloptoxin(16)-Sm1a.